Reading from the N-terminus, the 936-residue chain is MLTATKPLVGGACAAPSSSARRRTFVVPEARRKPGNGRRTSVSKVGSTSTSTTTTTTTTLSADSNGAAVGTVTRPDVHVQDRTHATEMKATVTVHMSKAAGVRDFLYDLILKTWLHVDLVSSELDPQTGQEREPISGAVKHSGRVDDEWDMYEATFKVPASFGPIGAVQVTNYHHSEMLLGDIEVFPTGQEESAVTFHCKSWIDPSHCTPDKRVFFPAHSYLPSQTPKGVEGLRKRELEILRGTGCGERKEHDRIYDYDVYNDLGNPDDDNNPTTRPVLGGKEHPYPRRCRTGRPRSKKDPFSEERSHKEHIYVPRDEAFTERKMGAFDTKKFMSQLHALTTGLKTAKHKSQSFPSLSAIDQLYDDNFRNQPVQPEGGKLRFVIDLLETELLHLFKLEGAAFLEGIRRVFKFETPEIHDRDKFAWFRDEEFARQTIAGMNPMSIQLVTEFPIKSNLDEATYGPADSLITKEVVEEQIRRVMTADEAVQNKKLFMLDYHDLLLPYVHKVRKLDGTTLYGSRALFFLTADGTLRPIAIELTRPKSKKKPQWRQVFTPGCDGSVTGSWLWQLAKAHILAHDAGVHQLVSHWLRTHACTEPYIIAANRQLSQMHPVYRLLHPHFRFTMEINAQARAMLINAGGIIEGSFVPGEYSLELSSVAYDQQWRFDMEALPEDLIRRGMAVRNPNGELELAIEDYPYANDGLLVWDAIKQWALTYVQHYYPCAADIVDDEELQAWWTEVRTKGHADKQDEPWWPELDSHENLAQTLATIMWVTSGHHAAVNFGQYPMAGYIPNRPTMARRNMPTEIGGDDMRDFVEAPEKVLLDTFPSQYQSAIVLAILDLLSTHSSDEEYMGTHEEPAWTKDGVINQAFEEFKESTRKIVEQVDEWNNDPDRKNRHGAGMVPYVLLRPSDGDPTDGDPTDEKMVMEMGIPNSISI.

The disordered stretch occupies residues 1–69; sequence MLTATKPLVG…LSADSNGAAV (69 aa). Residues 47–59 show a composition bias toward low complexity; it reads STSTSTTTTTTTT. The 130-residue stretch at 88-217 folds into the PLAT domain; sequence MKATVTVHMS…CTPDKRVFFP (130 aa). Residues 220–936 form the Lipoxygenase domain; that stretch reads SYLPSQTPKG…EMGIPNSISI (717 aa). Positions 264-308 are disordered; it reads LGNPDDDNNPTTRPVLGGKEHPYPRRCRTGRPRSKKDPFSEERSH. Basic residues predominate over residues 287-297; the sequence is PRRCRTGRPRS. Positions 298-308 are enriched in basic and acidic residues; sequence KKDPFSEERSH. Residues His587, His592, His777, Asn781, and Ile936 each coordinate Fe cation.

The protein belongs to the lipoxygenase family. Requires Fe cation as cofactor. The N-terminus is blocked.

Its subcellular location is the plastid. It is found in the chloroplast. The enzyme catalyses (9Z,12Z)-octadecadienoate + O2 = (13S)-hydroperoxy-(9Z,11E)-octadecadienoate. The catalysed reaction is (9Z,12Z,15Z)-octadecatrienoate + O2 = (13S)-hydroperoxy-(9Z,11E,15Z)-octadecatrienoate. Its pathway is lipid metabolism; oxylipin biosynthesis. In terms of biological role, plant lipoxygenase may be involved in a number of diverse aspects of plant physiology including growth and development, pest resistance, and senescence or responses to wounding. This enzyme is possibly involved in jasmonic acid synthesis. It exhibits linoleate 13-lipoxygenase and arachidonate 15-lipoxygenase activity. This is Lipoxygenase 2.1, chloroplastic (LOX2.1) from Hordeum vulgare (Barley).